Reading from the N-terminus, the 216-residue chain is Protein E4.2 (216 aa).

The protein is Protein E4.2 of Pantherophis guttatus (Corn snake).